The following is a 120-amino-acid chain: Glycine cleavage system H protein (120 aa).

The Lipoyl-binding domain maps to 17 to 99 (IATVGITAHA…RGAGWFFKLK (83 aa)). Residue K58 is modified to N6-lipoyllysine.

Belongs to the GcvH family. As to quaternary structure, the glycine cleavage system is composed of four proteins: P, T, L and H. It depends on (R)-lipoate as a cofactor.

Its function is as follows. The glycine cleavage system catalyzes the degradation of glycine. The H protein shuttles the methylamine group of glycine from the P protein to the T protein. This Allorhizobium ampelinum (strain ATCC BAA-846 / DSM 112012 / S4) (Agrobacterium vitis (strain S4)) protein is Glycine cleavage system H protein.